Reading from the N-terminus, the 338-residue chain is 1-aminocyclopropane-1-carboxylate deaminase (338 aa).

At lysine 51 the chain carries N6-(pyridoxal phosphate)lysine. Catalysis depends on serine 78, which acts as the Nucleophile.

This sequence belongs to the ACC deaminase/D-cysteine desulfhydrase family. Homotrimer. It depends on pyridoxal 5'-phosphate as a cofactor.

It catalyses the reaction 1-aminocyclopropane-1-carboxylate + H2O = 2-oxobutanoate + NH4(+). Functionally, catalyzes a cyclopropane ring-opening reaction, the irreversible conversion of 1-aminocyclopropane-1-carboxylate (ACC) to ammonia and alpha-ketobutyrate. Allows growth on ACC as a nitrogen source. The protein is 1-aminocyclopropane-1-carboxylate deaminase of Pseudomonas fluorescens.